The sequence spans 251 residues: Flap endonuclease Xni (251 aa).

Position 104 (Asp-104) interacts with Mg(2+). One can recognise a 5'-3' exonuclease domain in the interval 160-248 (VSPQQLSDYW…ALTGNLQQLR (89 aa)). Positions 171, 172, 180, 182, and 185 each coordinate K(+). The interval 184-189 (GIGPKT) is interaction with DNA.

Belongs to the Xni family. Requires Mg(2+) as cofactor. K(+) serves as cofactor.

Has flap endonuclease activity. During DNA replication, flap endonucleases cleave the 5'-overhanging flap structure that is generated by displacement synthesis when DNA polymerase encounters the 5'-end of a downstream Okazaki fragment. This is Flap endonuclease Xni from Serratia proteamaculans (strain 568).